Here is a 714-residue protein sequence, read N- to C-terminus: Fatty acid oxidation complex subunit alpha (714 aa).

An enoyl-CoA hydratase region spans residues 1 to 190; that stretch reads MEMASAFTLN…KLGLVDDVVP (190 aa). Residues 306-714 are 3-hydroxyacyl-CoA dehydrogenase; it reads APLNSVGILG…FWKTTATDLQ (409 aa).

This sequence in the N-terminal section; belongs to the enoyl-CoA hydratase/isomerase family. The protein in the central section; belongs to the 3-hydroxyacyl-CoA dehydrogenase family. In terms of assembly, heterotetramer of two alpha chains (FadJ) and two beta chains (FadI).

The protein localises to the cytoplasm. The catalysed reaction is a (3S)-3-hydroxyacyl-CoA = a (2E)-enoyl-CoA + H2O. It carries out the reaction a 4-saturated-(3S)-3-hydroxyacyl-CoA = a (3E)-enoyl-CoA + H2O. The enzyme catalyses a (3S)-3-hydroxyacyl-CoA + NAD(+) = a 3-oxoacyl-CoA + NADH + H(+). It catalyses the reaction (3S)-3-hydroxybutanoyl-CoA = (3R)-3-hydroxybutanoyl-CoA. The protein operates within lipid metabolism; fatty acid beta-oxidation. In terms of biological role, catalyzes the formation of a hydroxyacyl-CoA by addition of water on enoyl-CoA. Also exhibits 3-hydroxyacyl-CoA epimerase and 3-hydroxyacyl-CoA dehydrogenase activities. This chain is Fatty acid oxidation complex subunit alpha, found in Escherichia coli O81 (strain ED1a).